The chain runs to 184 residues: Orotate phosphoribosyltransferase (184 aa).

Residues Arg-99, Lys-100, Lys-103, His-105, and 125–133 contribute to the 5-phospho-alpha-D-ribose 1-diphosphate site; that span reads EDTTTTGNS. The orotate site is built by Thr-129 and Arg-157.

The protein belongs to the purine/pyrimidine phosphoribosyltransferase family. PyrE subfamily. In terms of assembly, homodimer. Mg(2+) serves as cofactor.

The catalysed reaction is orotidine 5'-phosphate + diphosphate = orotate + 5-phospho-alpha-D-ribose 1-diphosphate. Its pathway is pyrimidine metabolism; UMP biosynthesis via de novo pathway; UMP from orotate: step 1/2. Its function is as follows. Catalyzes the transfer of a ribosyl phosphate group from 5-phosphoribose 1-diphosphate to orotate, leading to the formation of orotidine monophosphate (OMP). This chain is Orotate phosphoribosyltransferase, found in Corynebacterium glutamicum (strain R).